Reading from the N-terminus, the 205-residue chain is Large ribosomal subunit protein uL4 (205 aa).

Over residues 43–60 the composition is skewed to polar residues; that stretch reads ARSGNRAQQTRAEVSAST. Residues 43 to 96 are disordered; that stretch reads ARSGNRAQQTRAEVSASTHKPWRQKGTGRARSGRASSPIWRGGGVTFPNKPNEN. Residues 62–74 are compositionally biased toward basic residues; the sequence is KPWRQKGTGRARS.

The protein belongs to the universal ribosomal protein uL4 family. As to quaternary structure, part of the 50S ribosomal subunit.

Its function is as follows. One of the primary rRNA binding proteins, this protein initially binds near the 5'-end of the 23S rRNA. It is important during the early stages of 50S assembly. It makes multiple contacts with different domains of the 23S rRNA in the assembled 50S subunit and ribosome. Forms part of the polypeptide exit tunnel. This Thiobacillus denitrificans (strain ATCC 25259 / T1) protein is Large ribosomal subunit protein uL4.